The primary structure comprises 335 residues: ATP-dependent 6-phosphofructokinase (335 aa).

Residue Gly-11 participates in ATP binding. 21-25 contacts ADP; that stretch reads RAVVR. ATP-binding positions include 72–73 and 102–105; these read RY and GDGS. Asp-103 is a binding site for Mg(2+). Residue 125–127 participates in substrate binding; sequence TID. Asp-127 functions as the Proton acceptor in the catalytic mechanism. ADP is bound at residue Arg-154. Residues Arg-162 and 169–171 contribute to the substrate site; that span reads MGR. ADP is bound by residues 185–187 and 213–215; these read GAD and KKH. Residues Glu-222, Arg-244, and 250–253 contribute to the substrate site; that span reads HIQR.

Belongs to the phosphofructokinase type A (PFKA) family. ATP-dependent PFK group I subfamily. Prokaryotic clade 'B1' sub-subfamily. In terms of assembly, homotetramer. Requires Mg(2+) as cofactor.

Its subcellular location is the cytoplasm. It carries out the reaction beta-D-fructose 6-phosphate + ATP = beta-D-fructose 1,6-bisphosphate + ADP + H(+). It functions in the pathway carbohydrate degradation; glycolysis; D-glyceraldehyde 3-phosphate and glycerone phosphate from D-glucose: step 3/4. Allosterically activated by ADP and other diphosphonucleosides, and allosterically inhibited by phosphoenolpyruvate. Functionally, catalyzes the phosphorylation of D-fructose 6-phosphate to fructose 1,6-bisphosphate by ATP, the first committing step of glycolysis. The protein is ATP-dependent 6-phosphofructokinase of Streptococcus pneumoniae (strain CGSP14).